Consider the following 429-residue polypeptide: Adenylosuccinate synthetase (429 aa).

GTP contacts are provided by residues glycine 12 to lysine 18 and glycine 40 to threonine 42. Aspartate 13 (proton acceptor) is an active-site residue. Residues aspartate 13 and glycine 40 each contribute to the Mg(2+) site. IMP-binding positions include aspartate 13 to lysine 16, asparagine 38 to histidine 41, threonine 129, arginine 143, glutamine 223, threonine 238, and arginine 302. Histidine 41 serves as the catalytic Proton donor. Substrate is bound at residue valine 298–arginine 304. Residues arginine 304, lysine 330–aspartate 332, and serine 412–serine 414 contribute to the GTP site.

Belongs to the adenylosuccinate synthetase family. In terms of assembly, homodimer. It depends on Mg(2+) as a cofactor.

It localises to the cytoplasm. The enzyme catalyses IMP + L-aspartate + GTP = N(6)-(1,2-dicarboxyethyl)-AMP + GDP + phosphate + 2 H(+). Its pathway is purine metabolism; AMP biosynthesis via de novo pathway; AMP from IMP: step 1/2. Plays an important role in the de novo pathway of purine nucleotide biosynthesis. Catalyzes the first committed step in the biosynthesis of AMP from IMP. In Bartonella bacilliformis (strain ATCC 35685 / KC583 / Herrer 020/F12,63), this protein is Adenylosuccinate synthetase.